Here is a 278-residue protein sequence, read N- to C-terminus: Protein FixR (278 aa).

NAD(+) is bound at residue Leu40–Ile64. Ser175 is a substrate binding site. The active-site Proton acceptor is the Tyr189.

This sequence belongs to the short-chain dehydrogenases/reductases (SDR) family.

This chain is Protein FixR (fixR), found in Bradyrhizobium diazoefficiens (strain JCM 10833 / BCRC 13528 / IAM 13628 / NBRC 14792 / USDA 110).